A 578-amino-acid chain; its full sequence is Proline--tRNA ligase (578 aa).

Belongs to the class-II aminoacyl-tRNA synthetase family. ProS type 1 subfamily. In terms of assembly, homodimer.

The protein resides in the cytoplasm. It carries out the reaction tRNA(Pro) + L-proline + ATP = L-prolyl-tRNA(Pro) + AMP + diphosphate. Its function is as follows. Catalyzes the attachment of proline to tRNA(Pro) in a two-step reaction: proline is first activated by ATP to form Pro-AMP and then transferred to the acceptor end of tRNA(Pro). As ProRS can inadvertently accommodate and process non-cognate amino acids such as alanine and cysteine, to avoid such errors it has two additional distinct editing activities against alanine. One activity is designated as 'pretransfer' editing and involves the tRNA(Pro)-independent hydrolysis of activated Ala-AMP. The other activity is designated 'posttransfer' editing and involves deacylation of mischarged Ala-tRNA(Pro). The misacylated Cys-tRNA(Pro) is not edited by ProRS. This Paraburkholderia phymatum (strain DSM 17167 / CIP 108236 / LMG 21445 / STM815) (Burkholderia phymatum) protein is Proline--tRNA ligase.